The sequence spans 209 residues: Uracil phosphoribosyltransferase (209 aa).

Residues Arg79, Arg104, and 131–139 (DPMLATGGS) each bind 5-phospho-alpha-D-ribose 1-diphosphate. Residues Ile194 and 199–201 (GDA) each bind uracil. Residue Asp200 participates in 5-phospho-alpha-D-ribose 1-diphosphate binding.

Belongs to the UPRTase family. Mg(2+) serves as cofactor.

It catalyses the reaction UMP + diphosphate = 5-phospho-alpha-D-ribose 1-diphosphate + uracil. It functions in the pathway pyrimidine metabolism; UMP biosynthesis via salvage pathway; UMP from uracil: step 1/1. With respect to regulation, allosterically activated by GTP. Functionally, catalyzes the conversion of uracil and 5-phospho-alpha-D-ribose 1-diphosphate (PRPP) to UMP and diphosphate. The chain is Uracil phosphoribosyltransferase from Citrifermentans bemidjiense (strain ATCC BAA-1014 / DSM 16622 / JCM 12645 / Bem) (Geobacter bemidjiensis).